Consider the following 241-residue polypeptide: 2,3,4,5-tetrahydropyridine-2,6-dicarboxylate N-acetyltransferase (241 aa).

This sequence belongs to the transferase hexapeptide repeat family. DapH subfamily.

It carries out the reaction (S)-2,3,4,5-tetrahydrodipicolinate + acetyl-CoA + H2O = L-2-acetamido-6-oxoheptanedioate + CoA. It participates in amino-acid biosynthesis; L-lysine biosynthesis via DAP pathway; LL-2,6-diaminopimelate from (S)-tetrahydrodipicolinate (acetylase route): step 1/3. In terms of biological role, catalyzes the transfer of an acetyl group from acetyl-CoA to tetrahydrodipicolinate. The chain is 2,3,4,5-tetrahydropyridine-2,6-dicarboxylate N-acetyltransferase from Thermoanaerobacter pseudethanolicus (strain ATCC 33223 / 39E) (Clostridium thermohydrosulfuricum).